Reading from the N-terminus, the 702-residue chain is Ribosomal RNA large subunit methyltransferase K/L (702 aa).

The 112-residue stretch at 43–154 (LVYQSLMWSR…KETASIALDL (112 aa)) folds into the THUMP domain.

The protein belongs to the methyltransferase superfamily. RlmKL family.

Its subcellular location is the cytoplasm. It catalyses the reaction guanosine(2445) in 23S rRNA + S-adenosyl-L-methionine = N(2)-methylguanosine(2445) in 23S rRNA + S-adenosyl-L-homocysteine + H(+). It carries out the reaction guanosine(2069) in 23S rRNA + S-adenosyl-L-methionine = N(2)-methylguanosine(2069) in 23S rRNA + S-adenosyl-L-homocysteine + H(+). Functionally, specifically methylates the guanine in position 2445 (m2G2445) and the guanine in position 2069 (m7G2069) of 23S rRNA. The polypeptide is Ribosomal RNA large subunit methyltransferase K/L (Shigella dysenteriae serotype 1 (strain Sd197)).